The following is a 53-amino-acid chain: ATP synthase protein 8 (53 aa).

The chain crosses the membrane as a helical span at residues 6–26 (PIGWLSLFIIFSLTFILFSMM).

Belongs to the ATPase protein 8 family. In terms of assembly, F-type ATPases have 2 components, CF(1) - the catalytic core - and CF(0) - the membrane proton channel.

It is found in the mitochondrion membrane. Its function is as follows. Mitochondrial membrane ATP synthase (F(1)F(0) ATP synthase or Complex V) produces ATP from ADP in the presence of a proton gradient across the membrane which is generated by electron transport complexes of the respiratory chain. F-type ATPases consist of two structural domains, F(1) - containing the extramembraneous catalytic core and F(0) - containing the membrane proton channel, linked together by a central stalk and a peripheral stalk. During catalysis, ATP synthesis in the catalytic domain of F(1) is coupled via a rotary mechanism of the central stalk subunits to proton translocation. Part of the complex F(0) domain. Minor subunit located with subunit a in the membrane. The chain is ATP synthase protein 8 (mt:ATPase8) from Ceratitis capitata (Mediterranean fruit fly).